Here is a 204-residue protein sequence, read N- to C-terminus: ATP-dependent Clp protease proteolytic subunit (204 aa).

The active-site Nucleophile is S101. H126 is an active-site residue.

The protein belongs to the peptidase S14 family. In terms of assembly, fourteen ClpP subunits assemble into 2 heptameric rings which stack back to back to give a disk-like structure with a central cavity, resembling the structure of eukaryotic proteasomes.

It localises to the cytoplasm. It catalyses the reaction Hydrolysis of proteins to small peptides in the presence of ATP and magnesium. alpha-casein is the usual test substrate. In the absence of ATP, only oligopeptides shorter than five residues are hydrolyzed (such as succinyl-Leu-Tyr-|-NHMec, and Leu-Tyr-Leu-|-Tyr-Trp, in which cleavage of the -Tyr-|-Leu- and -Tyr-|-Trp bonds also occurs).. Functionally, cleaves peptides in various proteins in a process that requires ATP hydrolysis. Has a chymotrypsin-like activity. Plays a major role in the degradation of misfolded proteins. The chain is ATP-dependent Clp protease proteolytic subunit from Deinococcus radiodurans (strain ATCC 13939 / DSM 20539 / JCM 16871 / CCUG 27074 / LMG 4051 / NBRC 15346 / NCIMB 9279 / VKM B-1422 / R1).